Reading from the N-terminus, the 57-residue chain is DNA gyrase inhibitor YacG (57 aa).

Residues Cys-5, Cys-8, Cys-20, and Cys-24 each contribute to the Zn(2+) site.

This sequence belongs to the DNA gyrase inhibitor YacG family. As to quaternary structure, interacts with GyrB. Zn(2+) serves as cofactor.

Inhibits all the catalytic activities of DNA gyrase by preventing its interaction with DNA. Acts by binding directly to the C-terminal domain of GyrB, which probably disrupts DNA binding by the gyrase. The polypeptide is DNA gyrase inhibitor YacG (Caulobacter vibrioides (strain ATCC 19089 / CIP 103742 / CB 15) (Caulobacter crescentus)).